The chain runs to 148 residues: MAAHKRLQKEITDMLKTPPSWCSAHLVDDNLQKWKATVQGPEGSPFEKGVFSMDIDIPADYPFKPPTLKFTTKIYHPNIKTSDGAICAEVFSTWSPQLKILDVLTTIRSILTDPNPDNPLETEIAQQFKTDRNAFNKTAKEWTKKYAK.

A UBC core domain is found at 2–148; sequence AAHKRLQKEI…AKEWTKKYAK (147 aa). Cys87 (glycyl thioester intermediate) is an active-site residue.

This sequence belongs to the ubiquitin-conjugating enzyme family. Interacts with mkkA (via F-box/WD40 repeat domains).

It carries out the reaction S-ubiquitinyl-[E1 ubiquitin-activating enzyme]-L-cysteine + [E2 ubiquitin-conjugating enzyme]-L-cysteine = [E1 ubiquitin-activating enzyme]-L-cysteine + S-ubiquitinyl-[E2 ubiquitin-conjugating enzyme]-L-cysteine.. It functions in the pathway protein modification; protein ubiquitination. Involved in protein ubiquitination and degradation during development. Mediates protein ubiquitination at the mound and finger stage required for subsequent development and may be an essential component of the developmental transition between the induction of postaggregative gene expression and subsequent cell-type differentiation and morphogenesis. ubcB and ubpB differentially control ubiquitination/deubiquitination and degradation of mkkA protein in a cell-type-specific and temporally regulated manner. This is Ubiquitin conjugating enzyme E2 B (ubcB) from Dictyostelium discoideum (Social amoeba).